An 892-amino-acid chain; its full sequence is Alanine--tRNA ligase (892 aa).

Zn(2+) contacts are provided by His-594, His-598, Cys-702, and His-706.

Belongs to the class-II aminoacyl-tRNA synthetase family. Requires Zn(2+) as cofactor.

The protein resides in the cytoplasm. The catalysed reaction is tRNA(Ala) + L-alanine + ATP = L-alanyl-tRNA(Ala) + AMP + diphosphate. In terms of biological role, catalyzes the attachment of alanine to tRNA(Ala) in a two-step reaction: alanine is first activated by ATP to form Ala-AMP and then transferred to the acceptor end of tRNA(Ala). Also edits incorrectly charged Ser-tRNA(Ala) and Gly-tRNA(Ala) via its editing domain. In Pyrobaculum neutrophilum (strain DSM 2338 / JCM 9278 / NBRC 100436 / V24Sta) (Thermoproteus neutrophilus), this protein is Alanine--tRNA ligase.